Here is a 200-residue protein sequence, read N- to C-terminus: Thymidine kinase (200 aa).

ATP-binding positions include 9 to 16 (STMNAGKS) and 88 to 91 (DEAH). The active-site Proton acceptor is the Glu-89. The Zn(2+) site is built by Cys-146, Cys-148, Cys-183, and His-186.

It belongs to the thymidine kinase family. Homotetramer.

The protein localises to the cytoplasm. It carries out the reaction thymidine + ATP = dTMP + ADP + H(+). This is Thymidine kinase from Rhizobium etli (strain ATCC 51251 / DSM 11541 / JCM 21823 / NBRC 15573 / CFN 42).